Here is a 178-residue protein sequence, read N- to C-terminus: Ribulose bisphosphate carboxylase small subunit, chloroplastic (178 aa).

The N-terminal 54 residues, methionine 1–glutamine 54, are a transit peptide targeting the chloroplast.

Belongs to the RuBisCO small chain family. Heterohexadecamer of 8 large and 8 small subunits.

The protein localises to the plastid. Its subcellular location is the chloroplast. RuBisCO catalyzes two reactions: the carboxylation of D-ribulose 1,5-bisphosphate, the primary event in carbon dioxide fixation, as well as the oxidative fragmentation of the pentose substrate. Both reactions occur simultaneously and in competition at the same active site. Although the small subunit is not catalytic it is essential for maximal activity. The chain is Ribulose bisphosphate carboxylase small subunit, chloroplastic from Helianthus annuus (Common sunflower).